We begin with the raw amino-acid sequence, 360 residues long: Mannan endo-1,4-beta-mannosidase (360 aa).

Residues 1–24 (MLKKLAVCLSIVLLLLGAASPISA) form the signal peptide. Residues 36–347 (QTTKDIMNWL…YQNSWTLNKG (312 aa)) form the GH26 domain. His-129 is a binding site for substrate. Catalysis depends on Glu-191, which acts as the Proton donor. Positions 196 and 266 each coordinate substrate. Catalysis depends on Glu-290, which acts as the Nucleophile.

It belongs to the glycosyl hydrolase 26 family. In terms of assembly, homodimer.

The protein localises to the secreted. It catalyses the reaction Random hydrolysis of (1-&gt;4)-beta-D-mannosidic linkages in mannans, galactomannans and glucomannans.. Its function is as follows. Involved in the degradation of glucomannan. Catalyzes the endo hydrolysis of beta-1,4-linked mannan, galactomannan and glucomannan. The polypeptide is Mannan endo-1,4-beta-mannosidase (Bacillus subtilis).